Here is a 1083-residue protein sequence, read N- to C-terminus: DNA primase (1083 aa).

The segment at Cys1022–Cys1061 adopts a CHC2-type zinc-finger fold.

Belongs to the herpesviridae DNA primase family. As to quaternary structure, associates with the helicase and the primase-associated factor to form the helicase-primase factor.

Its subcellular location is the host nucleus. Its function is as follows. Essential component of the helicase/primase complex. Unwinds the DNA at the replication forks and generates single-stranded DNA for both leading and lagging strand synthesis. The primase initiates primer synthesis and thereby produces large amount of short RNA primers on the lagging strand that the polymerase elongates using dNTPs. In Homo sapiens (Human), this protein is DNA primase.